The chain runs to 210 residues: Glutathione S-transferase 2 (210 aa).

In terms of domain architecture, GST N-terminal spans 1-80; that stretch reads MDFYYLPLSA…YLVEKYGKQN (80 aa). Residues S9, 50 to 52, and 64 to 66 each bind glutathione; these read HTI and ESR. In terms of domain architecture, GST C-terminal spans 87-208; it reads CPKKRALINQ…AGCLEMKKYF (122 aa).

The protein belongs to the GST superfamily. Theta family. As to quaternary structure, homodimer.

It catalyses the reaction RX + glutathione = an S-substituted glutathione + a halide anion + H(+). Its function is as follows. Conjugation of reduced glutathione to a wide number of exogenous and endogenous hydrophobic electrophiles. This Musca domestica (House fly) protein is Glutathione S-transferase 2 (Gst2).